We begin with the raw amino-acid sequence, 218 residues long: TPA-induced transmembrane protein homolog (218 aa).

The tract at residues 1–54 (MEEGSRSQSPREELELSMLDGPQEELTPLNNDLRIQPNSAEDPSPAQVGKESPW) is disordered. Residues 66–86 (KLWMVIVTIFLCFIIVIVISL) traverse the membrane as a helical segment.

Its subcellular location is the endoplasmic reticulum membrane. This Mus musculus (Mouse) protein is TPA-induced transmembrane protein homolog.